A 414-amino-acid chain; its full sequence is Succinylornithine transaminase (414 aa).

Lys-260 bears the N6-(pyridoxal phosphate)lysine mark.

Belongs to the class-III pyridoxal-phosphate-dependent aminotransferase family. AstC subfamily. Requires pyridoxal 5'-phosphate as cofactor.

The catalysed reaction is N(2)-succinyl-L-ornithine + 2-oxoglutarate = N-succinyl-L-glutamate 5-semialdehyde + L-glutamate. It participates in amino-acid degradation; L-arginine degradation via AST pathway; L-glutamate and succinate from L-arginine: step 3/5. Functionally, catalyzes the transamination of N(2)-succinylornithine and alpha-ketoglutarate into N(2)-succinylglutamate semialdehyde and glutamate. Can also act as an acetylornithine aminotransferase. The sequence is that of Succinylornithine transaminase from Yersinia pseudotuberculosis serotype O:1b (strain IP 31758).